The primary structure comprises 40 residues: Cell division inhibitor MciZ (40 aa).

As to quaternary structure, interacts with FtsZ. Binds to the C-terminal polymerization interface of FtsZ. Binds to FtsZ filaments.

With respect to regulation, highly effective in inhibiting polymerization at low and intermediate concentrations of GTP and only partially effective at high GTP concentrations. Blocks Z-ring formation in the mother cell during sporulation by inhibiting the polymerization of FtsZ. Binds to the minus end of FtsZ and functions as a filament-capping protein. At high concentrations, is capable of both capping and sequestration of FtsZ. Decreases the GTPase activity of FtsZ. This Bacillus subtilis (strain 168) protein is Cell division inhibitor MciZ.